The chain runs to 127 residues: Apolipoprotein C-IV (127 aa).

Residues 1-27 (MSLLRNRLQDLPALCLCVLVLACIGAC) form the signal peptide.

Belongs to the apolipoprotein C4 family.

It is found in the secreted. May participate in lipoprotein metabolism. The sequence is that of Apolipoprotein C-IV (APOC4) from Papio anubis (Olive baboon).